The sequence spans 633 residues: Threonine--tRNA ligase (633 aa).

The region spanning 1 to 59 (MIRITFSAEQKVKEYSGKVTGFDILQPDVLKEAIAFKVNGELHDLSREIEADAEIEVIQ) is the TGS domain. Residues 240–532 (DHRKIAKDMD…LIENYAGKFP (293 aa)) form a catalytic region. 3 residues coordinate Zn(2+): Cys332, His383, and His509.

It belongs to the class-II aminoacyl-tRNA synthetase family. Homodimer. Zn(2+) serves as cofactor.

Its subcellular location is the cytoplasm. It carries out the reaction tRNA(Thr) + L-threonine + ATP = L-threonyl-tRNA(Thr) + AMP + diphosphate + H(+). Functionally, catalyzes the attachment of threonine to tRNA(Thr) in a two-step reaction: L-threonine is first activated by ATP to form Thr-AMP and then transferred to the acceptor end of tRNA(Thr). Also edits incorrectly charged L-seryl-tRNA(Thr). The protein is Threonine--tRNA ligase of Wolbachia sp. subsp. Drosophila simulans (strain wRi).